A 284-amino-acid polypeptide reads, in one-letter code: Undecaprenyl-diphosphatase (284 aa).

A run of 8 helical transmembrane segments spans residues 7–27 (IILG…TGHL), 44–64 (EMFD…LYFH), 90–110 (LWLK…PLND), 116–136 (FYHF…FIVI), 167–187 (VLSL…ALLI), 197–217 (FTFF…ILHF), 229–249 (FGVL…AIKF), and 259–279 (FTFF…YAAF).

This sequence belongs to the UppP family.

The protein resides in the cell membrane. It catalyses the reaction di-trans,octa-cis-undecaprenyl diphosphate + H2O = di-trans,octa-cis-undecaprenyl phosphate + phosphate + H(+). In terms of biological role, catalyzes the dephosphorylation of undecaprenyl diphosphate (UPP). Confers resistance to bacitracin. In Lactococcus lactis subsp. cremoris (strain SK11), this protein is Undecaprenyl-diphosphatase.